The sequence spans 588 residues: Calcium/calmodulin-dependent protein kinase kinase 2 (588 aa).

The span at 1 to 14 (MSSCVSSQPSSNRA) shows a compositional bias: polar residues. Disordered stretches follow at residues 1–33 (MSSC…SQKP) and 78–100 (GQEV…RKLS). S2 is modified (N-acetylserine). Phosphoserine occurs at positions 100, 114, 129, 133, and 137. Low complexity predominate over residues 128–139 (YSPVSSPQSSPR). A disordered region spans residues 128–149 (YSPVSSPQSSPRLPRRPTVESH). The Protein kinase domain occupies 165–446 (YTLKDEIGKG…VPEIKLHPWV (282 aa)). ATP-binding positions include 171–179 (IGKGSYGVV) and K194. Positions 204 to 226 (QAGFPRRPPPRGTRPAPGGCIQP) are RP domain. The segment at 205–225 (AGFPRRPPPRGTRPAPGGCIQ) is disordered. D312 acts as the Proton acceptor in catalysis. The autoinhibitory domain stretch occupies residues 472 to 477 (ENSVKH). Positions 475–500 (VKHIPSLATVILVKTMIRKRSFGNPF) are calmodulin-binding. Residues P479, S495, S511, T522, and S572 each carry the phosphoserine modification. Positions 497 to 588 (GNPFEGSRRE…LRPEEAMEPE (92 aa)) are disordered. A compositionally biased stretch (basic and acidic residues) spans 521 to 536 (PTRECESLSELKEARQ). A compositionally biased stretch (basic and acidic residues) spans 579–588 (LRPEEAMEPE).

This sequence belongs to the protein kinase superfamily. Ser/Thr protein kinase family. In terms of assembly, interacts with calmodulin. Post-translationally, autophosphorylated and phosphorylated by PKA. Each isoform may show a different pattern of phosphorylation. Ubiquitously expressed with higher levels in the brain. Intermediate levels are detected in spleen, prostate, thyroid and leukocytes. The lowest level is in lung.

It localises to the nucleus. It is found in the cytoplasm. Its subcellular location is the cell projection. The protein resides in the neuron projection. The catalysed reaction is L-seryl-[protein] + ATP = O-phospho-L-seryl-[protein] + ADP + H(+). The enzyme catalyses L-threonyl-[protein] + ATP = O-phospho-L-threonyl-[protein] + ADP + H(+). Its activity is regulated as follows. Activated by Ca(2+)/calmodulin. Binding of calmodulin may relieve intrasteric autoinhibition. Autophosphorylation does not alter activity or regulation by Ca(2+)/calmodulin. In part, activity is independent on Ca(2+)/calmodulin. In terms of biological role, calcium/calmodulin-dependent protein kinase belonging to a proposed calcium-triggered signaling cascade involved in a number of cellular processes. Isoform 1, isoform 2 and isoform 3 phosphorylate CAMK1 and CAMK4. Isoform 3 phosphorylates CAMK1D. Isoform 4, isoform 5 and isoform 6 lacking part of the calmodulin-binding domain are inactive. Efficiently phosphorylates 5'-AMP-activated protein kinase (AMPK) trimer, including that consisting of PRKAA1, PRKAB1 and PRKAG1. This phosphorylation is stimulated in response to Ca(2+) signals. Seems to be involved in hippocampal activation of CREB1. May play a role in neurite growth. Isoform 3 may promote neurite elongation, while isoform 1 may promoter neurite branching. This Homo sapiens (Human) protein is Calcium/calmodulin-dependent protein kinase kinase 2 (CAMKK2).